We begin with the raw amino-acid sequence, 418 residues long: Chromo domain-containing protein rhino (418 aa).

In terms of domain architecture, Chromo spans 24–74 (YVVEKILGKRFVNGRPQVLVKWSGFPNENNTWEPLENVGNCMKLVSDFESE). 2 stretches are compositionally biased toward low complexity: residues 84–99 (AKSV…SSGP) and 107–120 (SSSK…KSVQ). Disordered stretches follow at residues 84–167 (AKSV…TDST) and 199–337 (PTKD…RCPR). The span at 131 to 143 (NQKKGKNIKKTAG) shows a compositional bias: basic residues. Polar residues predominate over residues 152 to 167 (PKTQMPSTSQVSTDST). The span at 218–228 (RLIEFPQREDA) shows a compositional bias: basic and acidic residues. Over residues 258–275 (GESSSSMSLPTVSSTSSE) the composition is skewed to low complexity. Basic and acidic residues predominate over residues 276–285 (KSIKVTKSEP). The segment at 353–418 (TKPFGVNRGL…FESLRIIVPK (66 aa)) is required for interaction with del/deadlock.

In terms of assembly, homodimer in solution. Dimerization is essential for chromatin binding. Component of the Rhino-Deadlock-Cutoff (RDC) complex, composed of rhi/rhino, del/deadlock and cuff/cutoff. Interacts (via C-terminus) with del/deadlock (via N-terminus); this interaction is direct. Two copies of del/deadlock associate with each rhi/rhino dimer. Interacts with cuff/cutoff; this interaction is indirect and is mediated by del/deadlock. Interacts (via Chromo domain) with kipf/kipferl (via C2H2 type zinc finger 4). Interacts (via Chromo domain) with His3/histone H3 (via N-terminus di- or tri-methylated on 'Lys-10' (H3K9me2/3)); this interaction is direct. Two His3 N-terminal tails oriented anti-parallel to each other are required for dimer binding to His3. As to expression, female specific, expressed in both somatic and germline cells but highly enriched in ovaries. In the germarium of the developing oocyte expressed in germline stem cells, cystoblasts and developing germline cysts. Expressed in nurse cells in the germarium and egg chamber.

The protein resides in the nucleus. Its subcellular location is the chromosome. In terms of biological role, involved in piRNA (piwi-interacting RNA)-mediated transposon repression. May be involved in formation of the perinuclear nuage, a subcellular structure implicated in RNA processing that may be involved in transposon RNA surveillance and silencing. Required for ping-pong amplification during piRNA biogenesis, probably by promoting transcription of piRNA precursors. As part of the Rhino-Deadlock-Cutoff (RDC) Complex associates with, and drives non-canonical transcription of germline specific dual-strand piRNA clusters 80F, 38C and 42AB, but not single-stranded piRNA cluster 20A. Induction of piRNA expression is potentially achieved through a mechanism that prevents transcriptional termination and leads to readthrough from flanking transcription units. Recruited to specific chromatin regions by a combination of H3K9me2/3 histone methylation and differentially expressed sequence-specific recruitment factors. This association may involve direct interaction with DNA. Associates with chromatin upon exposure to homologous piRNA and facilitates transcriptional read-through. As part of the RDC complex, involved in suppression of splicing. In ovaries, recruitment to specific heterochromatin clusters is nucleated and stabilized by kipf/kipferl. During oogenesis, involved in axis specification and may regulate chromosome condensation at the onset of a mitotic-like phase that occurs during nurse cell chromosome duplication. Involved in the distribution of mRNAs for proteins that play a role in anterior-posterior and dorsal-ventral axes specification during development of the oocyte, including grk/gurken, osk/oskar and vas/vasa. Mitigates meiotic double strand breaks and interacts with DNA damage signaling to mediate axis specification. In Drosophila melanogaster (Fruit fly), this protein is Chromo domain-containing protein rhino.